A 320-amino-acid polypeptide reads, in one-letter code: Protein TsetseEP (320 aa).

The signal sequence occupies residues 1-19 (MKFFISFAFLCLVLSCVAA). A disordered region spans residues 192–320 (GLPEPEPEPE…ESKPNSLFNF (129 aa)). Acidic residues predominate over residues 194–308 (PEPEPEPEPE…EPEPEPEPQP (115 aa)). The segment at 194–311 (PEPEPEPEPE…PEPEPQPEPE (118 aa)) is 59 X 2 AA tandem repeats of P-E.

Expressed in the gut, but not salivary glands, of female and male flies (at protein level). Present in vesicles in midgut cells and in the lumen of the gut.

Its subcellular location is the secreted. This chain is Protein TsetseEP, found in Glossina morsitans morsitans (Savannah tsetse fly).